We begin with the raw amino-acid sequence, 438 residues long: ATP-dependent protease ATPase subunit HslU (438 aa).

Residues V18, 60 to 65, D252, E317, and R389 contribute to the ATP site; that span reads GVGKTE.

This sequence belongs to the ClpX chaperone family. HslU subfamily. In terms of assembly, a double ring-shaped homohexamer of HslV is capped on each side by a ring-shaped HslU homohexamer. The assembly of the HslU/HslV complex is dependent on binding of ATP.

The protein resides in the cytoplasm. Its function is as follows. ATPase subunit of a proteasome-like degradation complex; this subunit has chaperone activity. The binding of ATP and its subsequent hydrolysis by HslU are essential for unfolding of protein substrates subsequently hydrolyzed by HslV. HslU recognizes the N-terminal part of its protein substrates and unfolds these before they are guided to HslV for hydrolysis. The sequence is that of ATP-dependent protease ATPase subunit HslU from Saccharophagus degradans (strain 2-40 / ATCC 43961 / DSM 17024).